The primary structure comprises 171 residues: NADH-quinone oxidoreductase subunit I (171 aa).

4Fe-4S ferredoxin-type domains follow at residues 63–92 (RRYE…IESD) and 102–131 (TRYD…ETQI). Residues C72, C75, C78, C82, C111, C114, C117, and C121 each contribute to the [4Fe-4S] cluster site.

This sequence belongs to the complex I 23 kDa subunit family. As to quaternary structure, NDH-1 is composed of 14 different subunits. Subunits NuoA, H, J, K, L, M, N constitute the membrane sector of the complex. [4Fe-4S] cluster serves as cofactor.

The protein localises to the cell inner membrane. The enzyme catalyses a quinone + NADH + 5 H(+)(in) = a quinol + NAD(+) + 4 H(+)(out). Its function is as follows. NDH-1 shuttles electrons from NADH, via FMN and iron-sulfur (Fe-S) centers, to quinones in the respiratory chain. The immediate electron acceptor for the enzyme in this species is believed to be ubiquinone. Couples the redox reaction to proton translocation (for every two electrons transferred, four hydrogen ions are translocated across the cytoplasmic membrane), and thus conserves the redox energy in a proton gradient. The sequence is that of NADH-quinone oxidoreductase subunit I from Paracidovorax citrulli (strain AAC00-1) (Acidovorax citrulli).